The primary structure comprises 379 residues: Presenilin-associated rhomboid-like protein, mitochondrial (379 aa).

Residues 1-52 constitute a mitochondrion transit peptide; it reads MAWRGWAQRGWGCGQAWAASVGGRSCEELTAALTPPRLLGRRFNFFIQQKCG. Over 53–101 the chain is Mitochondrial matrix; it reads FRKAPRKVEPRRSDTGTSGEAYKRSALIPPVEETVFYPSPYPIRSLIKP. Serine 65 bears the Phosphoserine mark. Threonine 69 is subject to Phosphothreonine. Serine 70 is subject to Phosphoserine. The helical transmembrane segment at 102–121 threads the bilayer; the sequence is LFFTVGFTGCAFGSAAIWQY. The Mitochondrial intermembrane segment spans residues 122–167; sequence ESLKSRVQSYFDGIKADWLDSIRPQKEGDFRKEINKWWNNLSDGQR. The helical transmembrane segment at 168 to 187 threads the bilayer; that stretch reads TVTGIIAANVLVFCLWRVPS. At 188 to 207 the chain is on the mitochondrial matrix side; the sequence is LQRTMIRYFTSNPASKVLCS. Residues 208–230 traverse the membrane as a helical segment; that stretch reads PMLLSTFSHFSLFHMAANMYVLW. The Mitochondrial intermembrane portion of the chain corresponds to 231–244; the sequence is SFSSSIVNILGQEQ. Residues 245–262 traverse the membrane as a helical segment; the sequence is FMAVYLSAGVISNFVSYV. The Mitochondrial matrix segment spans residues 263–273; it reads GKVATGRYGPS. A helical membrane pass occupies residues 274–292; the sequence is LGASGAIMTVLAAVCTKIP. Serine 277 (nucleophile) is an active-site residue. The Mitochondrial intermembrane portion of the chain corresponds to 293-295; the sequence is EGR. The helical transmembrane segment at 296-318 threads the bilayer; sequence LAIIFLPMFTFTAGNALKAIIAM. Over 319-332 the chain is Mitochondrial matrix; that stretch reads DTAGMILGWKFFDH. A helical transmembrane segment spans residues 333 to 354; sequence AAHLGGALFGIWYVTYGHELIW. Histidine 335 is a catalytic residue. Topologically, residues 355–379 are mitochondrial intermembrane; sequence KNREPLVKIWHEIRTNGPKKGGGSK.

It belongs to the peptidase S54 family. In terms of assembly, interacts with PSEN1 and PSEN2. Binds OPA1. Post-translationally, P-beta is proteolytically processed (beta-cleavage) in a PARL-dependent manner.

The protein localises to the mitochondrion inner membrane. It localises to the nucleus. It carries out the reaction Cleaves type-1 transmembrane domains using a catalytic dyad composed of serine and histidine that are contributed by different transmembrane domains.. In terms of biological role, required for the control of apoptosis during postnatal growth. Essential for proteolytic processing of an antiapoptotic form of OPA1 which prevents the release of mitochondrial cytochrome c in response to intrinsic apoptotic signals. Required for the maturation of PINK1 into its 52kDa mature form after its cleavage by mitochondrial-processing peptidase (MPP). Promotes cleavage of serine/threonine-protein phosphatase PGAM5 in damaged mitochondria in response to loss of mitochondrial membrane potential. Mediates differential cleavage of PINK1 and PGAM5 depending on the health status of mitochondria, disassociating from PINK1 and associating with PGAM5 in response to mitochondrial membrane potential loss. Required for processing of CLPB into a form with higher protein disaggregase activity by removing an autoinhibitory N-terminal peptide. Promotes processing of DIABLO/SMAC in the mitochondrion which is required for DIABLO apoptotic activity. Also required for cleavage of STARD7 and TTC19. Promotes changes in mitochondria morphology regulated by phosphorylation of P-beta domain. The protein is Presenilin-associated rhomboid-like protein, mitochondrial (PARL) of Pongo abelii (Sumatran orangutan).